The sequence spans 215 residues: Ribosomal RNA small subunit methyltransferase G (215 aa).

Residues glycine 77, phenylalanine 82, 130-131 (IE), and arginine 146 contribute to the S-adenosyl-L-methionine site.

It belongs to the methyltransferase superfamily. RNA methyltransferase RsmG family.

It localises to the cytoplasm. The enzyme catalyses guanosine(527) in 16S rRNA + S-adenosyl-L-methionine = N(7)-methylguanosine(527) in 16S rRNA + S-adenosyl-L-homocysteine. Specifically methylates the N7 position of guanine in position 527 of 16S rRNA. In Bartonella bacilliformis (strain ATCC 35685 / KC583 / Herrer 020/F12,63), this protein is Ribosomal RNA small subunit methyltransferase G.